A 432-amino-acid polypeptide reads, in one-letter code: uncharacterized protein (432 aa).

It to M.jannaschii MJ0977.

This is an uncharacterized protein from Methanocaldococcus jannaschii (strain ATCC 43067 / DSM 2661 / JAL-1 / JCM 10045 / NBRC 100440) (Methanococcus jannaschii).